The chain runs to 402 residues: 4-hydroxy-3-methylbut-2-enyl diphosphate reductase (402 aa).

Cys66 contacts [4Fe-4S] cluster. A (2E)-4-hydroxy-3-methylbut-2-enyl diphosphate-binding site is contributed by His96. Dimethylallyl diphosphate is bound at residue His96. An isopentenyl diphosphate-binding site is contributed by His96. Cys157 contributes to the [4Fe-4S] cluster binding site. Residue His185 participates in (2E)-4-hydroxy-3-methylbut-2-enyl diphosphate binding. His185 contacts dimethylallyl diphosphate. His185 serves as a coordination point for isopentenyl diphosphate. The active-site Proton donor is the Glu187. Thr250 is a binding site for (2E)-4-hydroxy-3-methylbut-2-enyl diphosphate. Cys288 is a [4Fe-4S] cluster binding site. Ser317, Ser318, Asn319, and Ser379 together coordinate (2E)-4-hydroxy-3-methylbut-2-enyl diphosphate. Dimethylallyl diphosphate is bound by residues Ser317, Ser318, Asn319, and Ser379. Ser317, Ser318, Asn319, and Ser379 together coordinate isopentenyl diphosphate.

The protein belongs to the IspH family. [4Fe-4S] cluster serves as cofactor.

The catalysed reaction is isopentenyl diphosphate + 2 oxidized [2Fe-2S]-[ferredoxin] + H2O = (2E)-4-hydroxy-3-methylbut-2-enyl diphosphate + 2 reduced [2Fe-2S]-[ferredoxin] + 2 H(+). The enzyme catalyses dimethylallyl diphosphate + 2 oxidized [2Fe-2S]-[ferredoxin] + H2O = (2E)-4-hydroxy-3-methylbut-2-enyl diphosphate + 2 reduced [2Fe-2S]-[ferredoxin] + 2 H(+). The protein operates within isoprenoid biosynthesis; dimethylallyl diphosphate biosynthesis; dimethylallyl diphosphate from (2E)-4-hydroxy-3-methylbutenyl diphosphate: step 1/1. It participates in isoprenoid biosynthesis; isopentenyl diphosphate biosynthesis via DXP pathway; isopentenyl diphosphate from 1-deoxy-D-xylulose 5-phosphate: step 6/6. Catalyzes the conversion of 1-hydroxy-2-methyl-2-(E)-butenyl 4-diphosphate (HMBPP) into a mixture of isopentenyl diphosphate (IPP) and dimethylallyl diphosphate (DMAPP). Acts in the terminal step of the DOXP/MEP pathway for isoprenoid precursor biosynthesis. This Thermosynechococcus vestitus (strain NIES-2133 / IAM M-273 / BP-1) protein is 4-hydroxy-3-methylbut-2-enyl diphosphate reductase.